Reading from the N-terminus, the 485-residue chain is Ribulose bisphosphate carboxylase large chain (485 aa).

The substrate site is built by N124 and T174. The Proton acceptor role is filled by K176. K178 is a substrate binding site. Mg(2+)-binding residues include K202, D204, and E205. K202 carries the post-translational modification N6-carboxylysine. H294 (proton acceptor) is an active-site residue. Substrate-binding residues include R295, H327, and S379.

The protein belongs to the RuBisCO large chain family. Type I subfamily. In terms of assembly, heterohexadecamer of 8 large chains and 8 small chains. The cofactor is Mg(2+).

The catalysed reaction is 2 (2R)-3-phosphoglycerate + 2 H(+) = D-ribulose 1,5-bisphosphate + CO2 + H2O. The enzyme catalyses D-ribulose 1,5-bisphosphate + O2 = 2-phosphoglycolate + (2R)-3-phosphoglycerate + 2 H(+). In terms of biological role, ruBisCO catalyzes two reactions: the carboxylation of D-ribulose 1,5-bisphosphate, the primary event in carbon dioxide fixation, as well as the oxidative fragmentation of the pentose substrate. Both reactions occur simultaneously and in competition at the same active site. This Rhodopseudomonas palustris (strain ATCC BAA-98 / CGA009) protein is Ribulose bisphosphate carboxylase large chain.